A 435-amino-acid polypeptide reads, in one-letter code: Glutamyl-tRNA reductase (435 aa).

Substrate is bound by residues 49–52 (TCNR), Ser-109, 114–116 (EGQ), and Gln-120. Catalysis depends on Cys-50, which acts as the Nucleophile. Residue 198–203 (GAGRMS) participates in NADP(+) binding.

Belongs to the glutamyl-tRNA reductase family. As to quaternary structure, homodimer.

It carries out the reaction (S)-4-amino-5-oxopentanoate + tRNA(Glu) + NADP(+) = L-glutamyl-tRNA(Glu) + NADPH + H(+). The protein operates within porphyrin-containing compound metabolism; protoporphyrin-IX biosynthesis; 5-aminolevulinate from L-glutamyl-tRNA(Glu): step 1/2. Its pathway is porphyrin-containing compound metabolism; chlorophyll biosynthesis. Catalyzes the NADPH-dependent reduction of glutamyl-tRNA(Glu) to glutamate 1-semialdehyde (GSA). The polypeptide is Glutamyl-tRNA reductase (Prochlorococcus marinus (strain MIT 9211)).